Consider the following 307-residue polypeptide: Major immediate early protein (307 aa).

An RING-type zinc finger spans residues 39–92 (CAVCLETYCVQSNNIIDFLMPSECTHLFCYKCVLNMYKNAMNVPRAAVSCPMCN).

This chain is Major immediate early protein (PE38), found in Orgyia pseudotsugata multicapsid polyhedrosis virus (OpMNPV).